A 358-amino-acid polypeptide reads, in one-letter code: MLLYVTDYLARFDSGFHVFQYLTLRAILGVLTALVISFVVGPPMIRRLKFVGQPVRSNGPTTHLCKAGTPTMGGALILVAIAAATLLWADLSNRYIWVVLVVTLLFGGVGFVDDYKKLLAKDSRGLTSRYKYFWQSVIALGVALFLYFTASVAAETELIVPFFKDVAVNLGGYYVLLTYFVVVGSSNAVNLTDGLDGLAVLPTVLVGGALGIFAYAAGHSGFAQYLGIPYIPEAGELVVFCGALVGAGLGFLWFNAYPAQVFMGDIGALALGAALGILAVLVRQELVLFIMGGVFVVETVSVMLQVASYKLTGRRIFRMAPLHHHFEIKGWPEPRVIVRFWIITVILVLIGLATLKIR.

The next 10 helical transmembrane spans lie at 21 to 41, 71 to 91, 95 to 115, 133 to 153, 166 to 186, 197 to 217, 234 to 254, 261 to 281, 286 to 306, and 337 to 357; these read YLTLRAILGVLTALVISFVVG, TMGGALILVAIAAATLLWADL, YIWVVLVVTLLFGGVGFVDDY, FWQSVIALGVALFLYFTASVA, VAVNLGGYYVLLTYFVVVGSS, GLAVLPTVLVGGALGIFAYAA, AGELVVFCGALVGAGLGFLWF, VFMGDIGALALGAALGILAVL, LVLFIMGGVFVVETVSVMLQV, and IVRFWIITVILVLIGLATLKI.

It belongs to the glycosyltransferase 4 family. MraY subfamily. Mg(2+) is required as a cofactor.

It is found in the cell inner membrane. It catalyses the reaction UDP-N-acetyl-alpha-D-muramoyl-L-alanyl-gamma-D-glutamyl-meso-2,6-diaminopimeloyl-D-alanyl-D-alanine + di-trans,octa-cis-undecaprenyl phosphate = di-trans,octa-cis-undecaprenyl diphospho-N-acetyl-alpha-D-muramoyl-L-alanyl-D-glutamyl-meso-2,6-diaminopimeloyl-D-alanyl-D-alanine + UMP. It participates in cell wall biogenesis; peptidoglycan biosynthesis. Functionally, catalyzes the initial step of the lipid cycle reactions in the biosynthesis of the cell wall peptidoglycan: transfers peptidoglycan precursor phospho-MurNAc-pentapeptide from UDP-MurNAc-pentapeptide onto the lipid carrier undecaprenyl phosphate, yielding undecaprenyl-pyrophosphoryl-MurNAc-pentapeptide, known as lipid I. This Nitrosococcus oceani (strain ATCC 19707 / BCRC 17464 / JCM 30415 / NCIMB 11848 / C-107) protein is Phospho-N-acetylmuramoyl-pentapeptide-transferase.